Consider the following 141-residue polypeptide: Hemoglobin subunit alpha-1 (141 aa).

A Globin domain is found at 1–141; sequence VLSGSDKNNV…VGNVLTAKYR (141 aa). Residue His-58 coordinates O2. Residue His-87 coordinates heme b.

Belongs to the globin family. In terms of assembly, heterotetramer of two alpha chains and two beta chains. Red blood cells.

Its function is as follows. Involved in oxygen transport from the lung to the various peripheral tissues. This Stercorarius maccormicki (South polar skua) protein is Hemoglobin subunit alpha-1.